Consider the following 347-residue polypeptide: Probable arabinogalactan endo-beta-1,4-galactanase A (347 aa).

Residues 1-16 (MLFSYLLATLPLLANA) form the signal peptide. Catalysis depends on glutamate 150, which acts as the Proton donor. Glutamate 260 serves as the catalytic Nucleophile.

It belongs to the glycosyl hydrolase 53 family.

It is found in the secreted. It catalyses the reaction The enzyme specifically hydrolyzes (1-&gt;4)-beta-D-galactosidic linkages in type I arabinogalactans.. Its function is as follows. Endogalactanase involved in the degradation of plant cell wall polysaccharides, and more particularly of hairy regions of pectin. This chain is Probable arabinogalactan endo-beta-1,4-galactanase A (galA), found in Aspergillus flavus (strain ATCC 200026 / FGSC A1120 / IAM 13836 / NRRL 3357 / JCM 12722 / SRRC 167).